Consider the following 204-residue polypeptide: MSENALRLIASYVEEAAAARARFFTDHAELVDAAARTMAVALARGGKILFCGNGGSAADAQHLAAEFVNRFELERPPLPALALTTDSSALTAIGNDYGFDRVFAKQVQALAGPSDVVVGISTSGNSPNVLAALRAARDKGCVTVGLAGRNGAIVPLCDYALLVPSDRTAHIQEVHATIGHLLCKLVDHYLFEAVMELGPYLEDH.

Residues 38–199 (MAVALARGGK…LFEAVMELGP (162 aa)) enclose the SIS domain. 53-55 (NGG) lines the substrate pocket. Zn(2+) contacts are provided by His62 and Glu66. Substrate-binding positions include Glu66, 95–96 (ND), 121–123 (STS), Ser126, and Gln172. Zn(2+) contacts are provided by Gln172 and His180.

It belongs to the SIS family. GmhA subfamily. In terms of assembly, homotetramer. Zn(2+) is required as a cofactor.

It is found in the cytoplasm. The enzyme catalyses 2 D-sedoheptulose 7-phosphate = D-glycero-alpha-D-manno-heptose 7-phosphate + D-glycero-beta-D-manno-heptose 7-phosphate. It participates in carbohydrate biosynthesis; D-glycero-D-manno-heptose 7-phosphate biosynthesis; D-glycero-alpha-D-manno-heptose 7-phosphate and D-glycero-beta-D-manno-heptose 7-phosphate from sedoheptulose 7-phosphate: step 1/1. Its function is as follows. Catalyzes the isomerization of sedoheptulose 7-phosphate in D-glycero-D-manno-heptose 7-phosphate. The polypeptide is Phosphoheptose isomerase (Solidesulfovibrio magneticus (strain ATCC 700980 / DSM 13731 / RS-1) (Desulfovibrio magneticus)).